The primary structure comprises 336 residues: MFLTLIAAIISFMVSAFTMPYFIKFYQLKKIGGQQMHEDVKQHLAKAGTPTMGGTVFLLVATAVSLLVNLFSIKNTQSLALISGILSIVVIYGIIGFLDDFLKIFKQINEGLTAKQKLALQLAGGLMFYFLHVSPSGISSINVFGYQLSLGIFYLFFVLFWVVGFSNAVNLTDGIDGLASISVVISLVTYGVIAYVQGQFDVLLLIGTMIGALLGFFCFNHKPAKVFMGDVGSLALGAMLAAISIALRQEWTLLIIGIVYVLETSSVMLQVSYFKYTKKKYGEGRRIFRMTPFHHHLELGGLSGKGKKWSEWQVDAFLWGVGSLASLLVLAILYVF.

10 consecutive transmembrane segments (helical) span residues 3-23 (LTLI…PYFI), 53-73 (GGTV…LFSI), 78-98 (SLAL…IGFL), 118-138 (LALQ…PSGI), 143-163 (VFGY…FWVV), 174-194 (GIDG…GVIA), 200-220 (FDVL…FCFN), 226-246 (VFMG…ISIA), 251-271 (WTLL…MLQV), and 316-336 (AFLW…LYVF).

Belongs to the glycosyltransferase 4 family. MraY subfamily. It depends on Mg(2+) as a cofactor.

It is found in the cell membrane. The catalysed reaction is UDP-N-acetyl-alpha-D-muramoyl-L-alanyl-gamma-D-glutamyl-L-lysyl-D-alanyl-D-alanine + di-trans,octa-cis-undecaprenyl phosphate = Mur2Ac(oyl-L-Ala-gamma-D-Glu-L-Lys-D-Ala-D-Ala)-di-trans,octa-cis-undecaprenyl diphosphate + UMP. It functions in the pathway cell wall biogenesis; peptidoglycan biosynthesis. Catalyzes the initial step of the lipid cycle reactions in the biosynthesis of the cell wall peptidoglycan: transfers peptidoglycan precursor phospho-MurNAc-pentapeptide from UDP-MurNAc-pentapeptide onto the lipid carrier undecaprenyl phosphate, yielding undecaprenyl-pyrophosphoryl-MurNAc-pentapeptide, known as lipid I. The sequence is that of Phospho-N-acetylmuramoyl-pentapeptide-transferase from Streptococcus pyogenes serotype M5 (strain Manfredo).